Reading from the N-terminus, the 115-residue chain is MARSTSKDAQALIQSLRSAYAATPSNLKIIDLYVVFAVFTALIQVVYMAIVGSFPFNAFLSGLLSCIGTAVLAVCLRIQVNKENKEFKDLAPERAFADFVLCNLVLHLVIMNFLG.

Topologically, residues 1–31 (MARSTSKDAQALIQSLRSAYAATPSNLKIID) are cytoplasmic. The chain crosses the membrane as a helical span at residues 32–52 (LYVVFAVFTALIQVVYMAIVG). At 53 to 55 (SFP) the chain is on the lumenal side. The chain crosses the membrane as a helical span at residues 56-76 (FNAFLSGLLSCIGTAVLAVCL). The Cytoplasmic portion of the chain corresponds to 77–94 (RIQVNKENKEFKDLAPER). The chain crosses the membrane as a helical span at residues 95 to 115 (AFADFVLCNLVLHLVIMNFLG).

The protein belongs to the DAD/OST2 family. As to quaternary structure, component of the oligosaccharyltransferase (OST) complex.

The protein resides in the endoplasmic reticulum membrane. Its pathway is protein modification; protein glycosylation. Subunit of the oligosaccharyl transferase (OST) complex that catalyzes the initial transfer of a defined glycan (Glc(3)Man(9)GlcNAc(2) in eukaryotes) from the lipid carrier dolichol-pyrophosphate to an asparagine residue within an Asn-X-Ser/Thr consensus motif in nascent polypeptide chains, the first step in protein N-glycosylation. N-glycosylation occurs cotranslationally and the complex associates with the Sec61 complex at the channel-forming translocon complex that mediates protein translocation across the endoplasmic reticulum (ER). All subunits are required for a maximal enzyme activity. In Betula pendula (European white birch), this protein is Dolichyl-diphosphooligosaccharide--protein glycosyltransferase subunit DAD1 (DAD1).